We begin with the raw amino-acid sequence, 140 residues long: Nucleoside diphosphate kinase (140 aa).

Lys-11, Phe-59, Arg-87, Thr-93, Arg-104, and Asn-114 together coordinate ATP. The active-site Pros-phosphohistidine intermediate is His-117.

Belongs to the NDK family. In terms of assembly, homotetramer. Requires Mg(2+) as cofactor.

It localises to the cytoplasm. The enzyme catalyses a 2'-deoxyribonucleoside 5'-diphosphate + ATP = a 2'-deoxyribonucleoside 5'-triphosphate + ADP. It catalyses the reaction a ribonucleoside 5'-diphosphate + ATP = a ribonucleoside 5'-triphosphate + ADP. Its function is as follows. Major role in the synthesis of nucleoside triphosphates other than ATP. The ATP gamma phosphate is transferred to the NDP beta phosphate via a ping-pong mechanism, using a phosphorylated active-site intermediate. In Novosphingobium aromaticivorans (strain ATCC 700278 / DSM 12444 / CCUG 56034 / CIP 105152 / NBRC 16084 / F199), this protein is Nucleoside diphosphate kinase.